Consider the following 427-residue polypeptide: Adenylosuccinate synthetase (427 aa).

Residues 12–18 and 40–42 contribute to the GTP site; these read GDEGKGK and GHT. Asp13 serves as the catalytic Proton acceptor. Mg(2+) contacts are provided by Asp13 and Gly40. Residues 13–16, 38–41, Thr126, Arg140, Gln221, Thr236, and Arg299 contribute to the IMP site; these read DEGK and NAGH. The active-site Proton donor is the His41. Residue 295–301 participates in substrate binding; that stretch reads STTKRPR. GTP is bound by residues Arg301, 327–329, and 409–411; these read KLD and SVG.

This sequence belongs to the adenylosuccinate synthetase family. In terms of assembly, homodimer. It depends on Mg(2+) as a cofactor.

The protein localises to the cytoplasm. It carries out the reaction IMP + L-aspartate + GTP = N(6)-(1,2-dicarboxyethyl)-AMP + GDP + phosphate + 2 H(+). The protein operates within purine metabolism; AMP biosynthesis via de novo pathway; AMP from IMP: step 1/2. Functionally, plays an important role in the de novo pathway of purine nucleotide biosynthesis. Catalyzes the first committed step in the biosynthesis of AMP from IMP. In Borrelia duttonii (strain Ly), this protein is Adenylosuccinate synthetase.